Consider the following 290-residue polypeptide: Flap endonuclease Xni (290 aa).

Mg(2+) is bound at residue D125. One can recognise a 5'-3' exonuclease domain in the interval V181 to A275. Residues L192, V203, and I206 each contribute to the K(+) site. The tract at residues G205 to T210 is interaction with DNA.

The protein belongs to the Xni family. Requires Mg(2+) as cofactor. It depends on K(+) as a cofactor.

Has flap endonuclease activity. During DNA replication, flap endonucleases cleave the 5'-overhanging flap structure that is generated by displacement synthesis when DNA polymerase encounters the 5'-end of a downstream Okazaki fragment. The chain is Flap endonuclease Xni from Colwellia psychrerythraea (strain 34H / ATCC BAA-681) (Vibrio psychroerythus).